The following is a 256-amino-acid chain: Ubiquinone/menaquinone biosynthesis C-methyltransferase UbiE (256 aa).

The segment covering 1 to 12 has biased composition (basic and acidic residues); it reads MNDQRKGDHAEP. The disordered stretch occupies residues 1–22; that stretch reads MNDQRKGDHAEPTTHFGYQDVP. Residues threonine 79, aspartate 100, and 128 to 129 each bind S-adenosyl-L-methionine; that span reads DA.

This sequence belongs to the class I-like SAM-binding methyltransferase superfamily. MenG/UbiE family.

The catalysed reaction is a 2-demethylmenaquinol + S-adenosyl-L-methionine = a menaquinol + S-adenosyl-L-homocysteine + H(+). It carries out the reaction a 2-methoxy-6-(all-trans-polyprenyl)benzene-1,4-diol + S-adenosyl-L-methionine = a 5-methoxy-2-methyl-3-(all-trans-polyprenyl)benzene-1,4-diol + S-adenosyl-L-homocysteine + H(+). The protein operates within quinol/quinone metabolism; menaquinone biosynthesis; menaquinol from 1,4-dihydroxy-2-naphthoate: step 2/2. It functions in the pathway cofactor biosynthesis; ubiquinone biosynthesis. Methyltransferase required for the conversion of demethylmenaquinol (DMKH2) to menaquinol (MKH2) and the conversion of 2-polyprenyl-6-methoxy-1,4-benzoquinol (DDMQH2) to 2-polyprenyl-3-methyl-6-methoxy-1,4-benzoquinol (DMQH2). The protein is Ubiquinone/menaquinone biosynthesis C-methyltransferase UbiE of Pseudomonas putida (Arthrobacter siderocapsulatus).